The sequence spans 1008 residues: MEIAISYKPNPLISSSTQLLKRSKSFGLVRFPAKYGLGATRKKQLFRVYASESSSGSSSNSDGGFSWVRLAQSIRLGAERIGEKIGESVKTEIGFDSEEASGRVNEYVARVKDSVHKGHHELTRFKNETVPSFIDWNKWEHWKDIRNWDGKRVAALFIYAFALLLSCQRVYVAIQAPRVERERRELTESFMEALIPEPSPGNIEKFKRNMWRKATPKGLKLKRFIEAPDGTLVHDSSYVGENAWDDDLETTEGSLKKIIGRNARIQTEAKKKLSQDLGVSGEIGDSVGNWRERLATWKEMLEREKLSEQLNSSAAKYVVEFDMKEVEKSLREDVIGRTSETEGTRALWISKRWWRYRPKLPYTYFLQKLDSSEVAAVVFTEDLKRLYVTMKEGFPLEYIVDIPLDPYLFETICNAGVEVDLLQKRQIHYFMKVFIALLPGILILWFIRESAMLLLITSKRFLYKKYNQLFDMAYAENFILPVGDVSETKSMYKEVVLGGDVWDLLDELMIYMGNPMQYYEKDVAFVRGVLLSGPPGTGKTLFARTLAKESGLPFVFASGAEFTDSEKSGAAKINEMFSIARRNAPAFVFVDEIDAIAGRHARKDPRRRATFEALIAQLDGEKEKTGIDRFSLRQAVIFICATNRPDELDLEFVRSGRIDRRLYIGLPDAKQRVQIFGVHSAGKNLAEDIDFGKLVFRTVGFSGADIRNLVNEAAIMSVRKGRSYIYQQDIVDVLDKQLLEGMGVLLTEEEQQKCEQSVSYEKKRLLAVHEAGHIVLAHLFPRFDWHAFSQLLPGGKETAVSVFYPREDMVDQGYTTFGYMKMQMVVAHGGRCAERVVFGDNVTDGGKDDLEKITKIAREMVISPQSARLGLTQLVKKIGMVDLPDNPDGELIKYRWDHPHVMPAEMSVEVSELFTRELTRYIEETEELAMNALRANRHILDLITRELLEKSRITGLEVEEKMKDLSPLMFEDFVKPFQINPDDEELLPHKDRVSYQPVDLRAAPLHRS.

The N-terminal 49 residues, 1-49, are a transit peptide targeting the chloroplast; sequence MEIAISYKPNPLISSSTQLLKRSKSFGLVRFPAKYGLGATRKKQLFRVY. Transmembrane regions (helical) follow at residues 154 to 174 and 427 to 447; these read AALF…YVAI and IHYF…LWFI. 533 to 540 lines the ATP pocket; the sequence is GPPGTGKT. H769 is a binding site for Zn(2+). Residue E770 is part of the active site. Zn(2+) is bound by residues H773 and D849.

This sequence in the N-terminal section; belongs to the AAA ATPase family. It in the C-terminal section; belongs to the peptidase M41 family. Zn(2+) is required as a cofactor.

The protein localises to the plastid. It is found in the chloroplast thylakoid membrane. In terms of biological role, probable ATP-dependent zinc metallopeptidase. This is ATP-dependent zinc metalloprotease FTSH 12, chloroplastic (FTSH12) from Arabidopsis thaliana (Mouse-ear cress).